The primary structure comprises 190 residues: Potassium-transporting ATPase KdpC subunit (190 aa).

Residues 10 to 30 (VLLLVLTGLTGFAYPLLSTAI) form a helical membrane-spanning segment.

Belongs to the KdpC family. As to quaternary structure, the system is composed of three essential subunits: KdpA, KdpB and KdpC.

It localises to the cell inner membrane. In terms of biological role, part of the high-affinity ATP-driven potassium transport (or Kdp) system, which catalyzes the hydrolysis of ATP coupled with the electrogenic transport of potassium into the cytoplasm. This subunit acts as a catalytic chaperone that increases the ATP-binding affinity of the ATP-hydrolyzing subunit KdpB by the formation of a transient KdpB/KdpC/ATP ternary complex. The chain is Potassium-transporting ATPase KdpC subunit from Sorangium cellulosum (strain So ce56) (Polyangium cellulosum (strain So ce56)).